The sequence spans 683 residues: Transcription factor SFP1 (683 aa).

6 disordered regions span residues 156–178 (ATNT…PYHR), 305–324 (DSNS…NIIQ), 332–357 (VNHT…TANP), 399–420 (SNSP…NSGI), 498–517 (HNSM…YNTF), and 535–573 (IDDI…NNYK). The span at 160–173 (LQIQQPTKRPSVSN) shows a compositional bias: polar residues. The tract at residues 230–458 (NTTNMSQIPM…NYSLNKTSRN (229 aa)) is prion domain (PrD). The span at 535–557 (IDDIDDDDDVDDDDDDDDDDDTE) shows a compositional bias: acidic residues. Polar residues predominate over residues 558–573 (NGSSSNGKSVHNNNYK). 2 consecutive C2H2-type zinc fingers follow at residues 598–623 (FKCP…LHGH) and 659–683 (YRCE…HSTH).

Interacts with the target of rapamycin complex 1 (TORC1) in a rapamycin-dependent manner. Interacts with MRS6. Post-translationally, phosphorylated by TORC1 kinase at multiple sites. Phosphorylation regulates nuclear localization and RP promoter binding.

Its subcellular location is the cytoplasm. The protein localises to the nucleus. Its function is as follows. Transcription factor that regulates ribosomal protein (RP) and ribosome biogenesis (Ribi) gene expression in response to nutrients and stress. Promotes RP gene expression under optimal growth conditions. Leaves the nucleus upon environmental challenges, resulting in a down-regulation of RP gene transcription. The effect of the environmental cues on SFP1 localization is mediated through the TOR pathway. Also regulates the expression of genes involved in the G2/M transition during the mitotic cell cycle and the DNA-damage response. Required for carbon-source modulation of cell size. This chain is Transcription factor SFP1 (SFP1), found in Saccharomyces cerevisiae (strain ATCC 204508 / S288c) (Baker's yeast).